We begin with the raw amino-acid sequence, 4349 residues long: Dynein heavy chain, cytoplasmic (4349 aa).

The tract at residues 1 to 1907 (MEVTSAAAPS…YIKMANAKLN (1907 aa)) is stem. 6 coiled-coil regions span residues 459-480 (WEEN…RNEK), 1178-1215 (LMKF…STAQ), 1266-1293 (SQWE…QAKI), 1334-1354 (ESRI…KEAL), 1560-1577 (YKEF…LNRV), and 1640-1670 (NIPN…EKER). AAA stretches follow at residues 1908 to 2133 (YGFE…VLVS), 2201 to 2459 (NAIR…FTTA), 2565 to 2814 (EVNT…WVRG), and 2908 to 3177 (TFCE…QGKV). An ATP-binding site is contributed by 1946–1953 (GPAGTGKT). A coiled-coil region spans residues 2194 to 2217 (ANLEALENAIRELAAERHLVVNEL). Residues 2239 to 2246 (GNSGSGKS), 2604 to 2611 (GPPGSGKT), and 2946 to 2953 (GVSGSGKT) each bind ATP. Coiled-coil stretches lie at residues 3186–3294 (LDFV…LAKA), 3420–3477 (GPLK…EMSR), and 3774–3807 (DNVI…VEEI). The interval 3186-3477 (LDFVTQYIKL…TQAIKAEMSR (292 aa)) is stalk. AAA stretches follow at residues 3563–3792 (LSTA…EISA) and 4001–4213 (AERF…IVDT).

It belongs to the dynein heavy chain family. In terms of assembly, consists of at least two heavy chains and a number of intermediate and light chains.

The protein resides in the cytoplasm. It localises to the cytoskeleton. Its function is as follows. Cytoplasmic dynein acts as a motor for the intracellular retrograde motility of vesicles and organelles along microtubules. Dynein has ATPase activity; the force-producing power stroke is thought to occur on release of ADP. This is Dynein heavy chain, cytoplasmic (DHC1) from Fusarium vanettenii (Neocosmospora pisi).